We begin with the raw amino-acid sequence, 507 residues long: Capsid vertex component 1 (507 aa).

The segment at 219–257 (AAAETSVSKHHPALENPSNIRGSAGGEGGGGRAGTGGTV) is disordered. Positions 241–257 (SAGGEGGGGRAGTGGTV) are enriched in gly residues.

This sequence belongs to the herpesviridae CVC1 protein family. Interacts (via C-terminus) with capsid vertex component 2/CVC2.

The protein localises to the virion. The protein resides in the host nucleus. Its function is as follows. Capsid vertex-specific component that plays a role during viral DNA encapsidation, assuring correct genome cleavage and presumably stabilizing capsids that contain full-length viral genomes. This is Capsid vertex component 1 from Epstein-Barr virus (strain B95-8) (HHV-4).